Consider the following 239-residue polypeptide: Sensory rhodopsin-2 (239 aa).

Topologically, residues 1–3 (MVG) are extracellular. The helical transmembrane segment at 4-25 (LTTLFWLGAIGMLVGTLAFAWA) threads the bilayer. At 26-33 (GRDAGSGE) the chain is on the cytoplasmic side. Residues 34 to 55 (RRYYVTLVGISGIAAVAYVVMA) form a helical membrane-spanning segment. The Extracellular segment spans residues 56–69 (LGVGWVPVAERTVF). Residues 70-91 (APRYIDWILTTPLIVYFLGLLA) traverse the membrane as a helical segment. The Cytoplasmic portion of the chain corresponds to 92-94 (GLD). The helical transmembrane segment at 95–117 (SREFGIVITLNTVVMLAGFAGAM) threads the bilayer. The Extracellular portion of the chain corresponds to 118 to 121 (VPGI). A helical membrane pass occupies residues 122–149 (ERYALFGMGAVAFLGLVYYLVGPMTESA). Topologically, residues 150-153 (SQRS) are cytoplasmic. A helical transmembrane segment spans residues 154 to 181 (SGIKSLYVRLRNLTVILWAIYPFIWLLG). The Extracellular portion of the chain corresponds to 182–189 (PPGVALLT). A helical transmembrane segment spans residues 190–222 (PTVDVALIVYLDLVTKVGFGFIALDAAATLRAE). An N6-(retinylidene)lysine modification is found at Lys205. Residues 223-239 (HGESLAGVDTDAPAVAD) are Cytoplasmic-facing.

The protein belongs to the archaeal/bacterial/fungal opsin family. Homodimer. Interacts with HTR-II.

It is found in the cell membrane. Its function is as follows. Photophobic photoreceptor responsible for the negative phototaxis. Activates the sensory rhodopsin II transducer (HTR-II) in response to blue light. The sequence is that of Sensory rhodopsin-2 (sop2) from Natronomonas pharaonis (Natronobacterium pharaonis).